A 151-amino-acid polypeptide reads, in one-letter code: Exosporium protein B (151 aa).

It localises to the spore wall. The chain is Exosporium protein B from Clostridium sporogenes (strain ATCC 15579).